We begin with the raw amino-acid sequence, 309 residues long: Putative rhizopine-binding protein (309 aa).

An N-terminal signal peptide occupies residues Met1–Ala20.

Belongs to the bacterial solute-binding protein 2 family.

It is found in the periplasm. In terms of biological role, involved in rhizopine (L-3-O-methyl-scyllo-inosamine) catabolism. Could be involved in its high affinity transport. The polypeptide is Putative rhizopine-binding protein (mocB) (Rhizobium meliloti (Ensifer meliloti)).